The primary structure comprises 651 residues: Coronin-like protein (651 aa).

WD repeat units follow at residues 79–110 (GHTA…GIWD), 138–169 (GHAR…KLWN), 180–210 (KHPD…RVWN), and 226–257 (AKNQ…GIWD). Positions 408–609 (APSFHEAKRP…TSPKSLGLKK (202 aa)) are disordered. The segment covering 427-451 (LEEKKEQPKVEKPISESEKEVKQEA) has biased composition (basic and acidic residues). Phosphoserine is present on residues Ser-441, Ser-454, and Ser-456. Over residues 452–465 (PKSPSPLKSASSSS) the composition is skewed to low complexity. 2 positions are modified to phosphothreonine: Thr-517 and Thr-529. Basic and acidic residues-rich tracts occupy residues 523–540 (ETKK…ELKP) and 547–572 (TDRK…EQEK). 2 positions are modified to phosphoserine: Ser-573 and Ser-579. A compositionally biased stretch (low complexity) spans 578–590 (SSITAAKTAITAS). Residues 618–650 (VLQLEDVVDKLTKANLDKDERLLKLEQKIGELS) adopt a coiled-coil conformation.

It belongs to the WD repeat coronin family. As to quaternary structure, binds to F-actin.

This Saccharomyces cerevisiae (strain ATCC 204508 / S288c) (Baker's yeast) protein is Coronin-like protein (CRN1).